We begin with the raw amino-acid sequence, 62 residues long: Conotoxin Pn-B02 (62 aa).

The signal sequence occupies residues 1 to 19 (MRCLPVFIILLLLIASAPS). A propeptide spanning residues 20–49 (FDALPKTEDNVPLSSFHDNLKRTRRIHLNI) is cleaved from the precursor. A61 bears the Alanine amide mark.

The protein belongs to the conotoxin T superfamily. Contains 2 disulfide bonds that can be either 'C1-C3, C2-C4' or 'C1-C4, C2-C3', since these disulfide connectivities have been observed for conotoxins with cysteine framework V (for examples, see AC P0DQQ7 and AC P81755). As to expression, expressed by the venom duct.

Its subcellular location is the secreted. This is Conotoxin Pn-B02 from Conus pennaceus (Feathered cone).